A 351-amino-acid chain; its full sequence is tRNA uridine(34) hydroxylase (351 aa).

Residues Asp-146–Leu-240 form the Rhodanese domain. The Cysteine persulfide intermediate role is filled by Cys-200.

It belongs to the TrhO family.

The catalysed reaction is uridine(34) in tRNA + AH2 + O2 = 5-hydroxyuridine(34) in tRNA + A + H2O. Catalyzes oxygen-dependent 5-hydroxyuridine (ho5U) modification at position 34 in tRNAs. The sequence is that of tRNA uridine(34) hydroxylase from Sodalis glossinidius (strain morsitans).